We begin with the raw amino-acid sequence, 348 residues long: Putative zinc metalloprotease HP_0258 (348 aa).

Histidine 16 serves as a coordination point for Zn(2+). The active site involves glutamate 17. Histidine 20 is a Zn(2+) binding site. 5 helical membrane-spanning segments follow: residues 43-63 (CFFK…GGYV), 93-113 (WILF…YFFL), 247-267 (LIMG…VGAL), 275-295 (MLLL…LLPI), and 324-344 (LWLA…FNDL). One can recognise a PDZ domain in the interval 106 to 175 (AILVYFFLAL…GELVLEIERN (70 aa)).

It belongs to the peptidase M50B family. Requires Zn(2+) as cofactor.

The protein resides in the cell inner membrane. The protein is Putative zinc metalloprotease HP_0258 of Helicobacter pylori (strain ATCC 700392 / 26695) (Campylobacter pylori).